The following is an 88-amino-acid chain: Alpha-latrotoxin associated low molecular weight protein 2 (88 aa).

The first 19 residues, 1–19 (MLKLICIVFLVTVLTFVVG), serve as a signal peptide directing secretion. Intrachain disulfides connect C30–C66, C46–C62, and C49–C75.

This sequence belongs to the arthropod CHH/MIH/GIH/VIH hormone family. Expressed by the venom gland.

It is found in the secreted. Its function is as follows. May increase the toxicity of alpha-latrotoxin and/or other venom components. Is non-toxic to mice and to the cockroach Periplaneta americana. This is Alpha-latrotoxin associated low molecular weight protein 2 from Latrodectus geometricus (Brown widow spider).